Consider the following 211-residue polypeptide: Troponin I, cardiac muscle (211 aa).

The segment at 1 to 25 is disordered; the sequence is MADESSDAAGEPQPAPAPVRRRSSA. Ala2 carries the post-translational modification N-acetylalanine. Phosphoserine occurs at positions 5 and 6. Ser23 and Ser24 each carry phosphoserine; by PKA and PKD/PRKD1. Position 27 is a phosphotyrosine (Tyr27). Thr32 carries the post-translational modification Phosphothreonine; by STK4/MST1. The interval 33 to 80 is involved in binding TNC; sequence EPHAKKKSKISASRKLQLKTLMLQIAKQEMEREAEERRGEKGRVLSTR. A phosphoserine; by PKC/PRKCE mark is found at Ser43 and Ser45. Thr52 carries the post-translational modification Phosphothreonine; by STK4/MST1. Phosphoserine is present on Ser78. Thr79 carries the post-translational modification Phosphothreonine. Phosphothreonine; by STK4/MST1 is present on residues Thr130 and Thr144. Residues 130 to 151 form an involved in binding TNC and actin region; that stretch reads TQKIYDLRGKFKRPTLRRVRIS. Ser151 bears the Phosphoserine; by PAK3 mark. 2 positions are modified to phosphoserine: Ser167 and Ser200.

It belongs to the troponin I family. As to quaternary structure, interacts with TRIM63. Binds to actin and tropomyosin. Interacts with STK4/MST1. Post-translationally, phosphorylated at Ser-23 and Ser-24 by PRKD1; phosphorylation reduces myofilament calcium sensitivity. Phosphorylated preferentially at Thr-32. Phosphorylation by STK4/MST1 alters its binding affinity to TNNC1 (cardiac Tn-C) and TNNT2 (cardiac Tn-T). Phosphorylated at Ser-43 and Ser-45 by PRKCE; phosphorylation increases myocardium contractile dysfunction.

Its function is as follows. Troponin I is the inhibitory subunit of troponin, the thin filament regulatory complex which confers calcium-sensitivity to striated muscle actomyosin ATPase activity. The chain is Troponin I, cardiac muscle (Tnni3) from Rattus norvegicus (Rat).